We begin with the raw amino-acid sequence, 368 residues long: Methionine import ATP-binding protein MetN (368 aa).

One can recognise an ABC transporter domain in the interval 5–260 (IELNNLSVQF…PKEALTKQFI (256 aa)). ATP is bound at residue 41-48 (GYSGAGKS).

This sequence belongs to the ABC transporter superfamily. Methionine importer (TC 3.A.1.24) family. As to quaternary structure, the complex is composed of two ATP-binding proteins (MetN), two transmembrane proteins (MetI) and a solute-binding protein (MetQ).

The protein localises to the cell membrane. The enzyme catalyses L-methionine(out) + ATP + H2O = L-methionine(in) + ADP + phosphate + H(+). It carries out the reaction D-methionine(out) + ATP + H2O = D-methionine(in) + ADP + phosphate + H(+). In terms of biological role, part of the ABC transporter complex MetNIQ involved in methionine import. Responsible for energy coupling to the transport system. This Lactococcus lactis subsp. cremoris (strain SK11) protein is Methionine import ATP-binding protein MetN.